A 602-amino-acid polypeptide reads, in one-letter code: Elongation factor 4 (602 aa).

One can recognise a tr-type G domain in the interval 8 to 189 (KNIRNFSIIA…KIITTIPAPS (182 aa)). Residues 20-25 (DHGKST) and 136-139 (NKID) each bind GTP.

Belongs to the TRAFAC class translation factor GTPase superfamily. Classic translation factor GTPase family. LepA subfamily.

The protein resides in the cell inner membrane. It carries out the reaction GTP + H2O = GDP + phosphate + H(+). Required for accurate and efficient protein synthesis under certain stress conditions. May act as a fidelity factor of the translation reaction, by catalyzing a one-codon backward translocation of tRNAs on improperly translocated ribosomes. Back-translocation proceeds from a post-translocation (POST) complex to a pre-translocation (PRE) complex, thus giving elongation factor G a second chance to translocate the tRNAs correctly. Binds to ribosomes in a GTP-dependent manner. This Helicobacter pylori (strain Shi470) protein is Elongation factor 4.